The primary structure comprises 260 residues: Cytosolic Fe-S cluster assembly factor Nubp2 homolog 2 (260 aa).

Position 14–21 (14–21) interacts with ATP; it reads GKGGVGKS. 2 residues coordinate [4Fe-4S] cluster: Cys188 and Cys191.

The protein belongs to the Mrp/NBP35 ATP-binding proteins family. NUBP2/CFD1 subfamily. Heterotetramer of 2 Nubp1 and 2 Nubp2 chains. The cofactor is [4Fe-4S] cluster.

It is found in the cytoplasm. Component of the cytosolic iron-sulfur (Fe/S) protein assembly (CIA) machinery. Required for maturation of extramitochondrial Fe-S proteins. The Nubp1-Nubp2 heterotetramer forms a Fe-S scaffold complex, mediating the de novo assembly of an Fe-S cluster and its transfer to target apoproteins. This is Cytosolic Fe-S cluster assembly factor Nubp2 homolog 2 from Drosophila yakuba (Fruit fly).